A 154-amino-acid chain; its full sequence is MPHSKHPSSHPHIIIYTDGACKGNPGPGGWGAVLRSGSHEKHIHGGEKLTTNNRMEICAVIFALKALKQRSSVELWTDSQYVQKGVTEWLEGWKKRGWKTASKDPVKNADLWQELDTLLPDHDISWHWVRGHNGHPGNELADALANKGVEEFLP.

In terms of domain architecture, RNase H type-1 spans 9-150 (SHPHIIIYTD…ADALANKGVE (142 aa)). Mg(2+) contacts are provided by Asp18, Glu56, Asp78, and Asp142.

Belongs to the RNase H family. Monomer. It depends on Mg(2+) as a cofactor.

The protein localises to the cytoplasm. It catalyses the reaction Endonucleolytic cleavage to 5'-phosphomonoester.. Its function is as follows. Endonuclease that specifically degrades the RNA of RNA-DNA hybrids. This Polynucleobacter asymbioticus (strain DSM 18221 / CIP 109841 / QLW-P1DMWA-1) (Polynucleobacter necessarius subsp. asymbioticus) protein is Ribonuclease H.